We begin with the raw amino-acid sequence, 210 residues long: Pyridoxine/pyridoxamine 5'-phosphate oxidase (210 aa).

Substrate contacts are provided by residues 7-10 and K65; that span reads REDY. Residues 60–65, 75–76, R81, K82, and Q104 contribute to the FMN site; these read RMVLLK and FT. Residues Y122, R126, and S130 each coordinate substrate. Residues 139 to 140 and W183 contribute to the FMN site; that span reads QS. 189-191 lines the substrate pocket; sequence RLH. FMN is bound at residue R193.

Belongs to the pyridoxamine 5'-phosphate oxidase family. Homodimer. FMN is required as a cofactor.

The catalysed reaction is pyridoxamine 5'-phosphate + O2 + H2O = pyridoxal 5'-phosphate + H2O2 + NH4(+). The enzyme catalyses pyridoxine 5'-phosphate + O2 = pyridoxal 5'-phosphate + H2O2. The protein operates within cofactor metabolism; pyridoxal 5'-phosphate salvage; pyridoxal 5'-phosphate from pyridoxamine 5'-phosphate: step 1/1. It functions in the pathway cofactor metabolism; pyridoxal 5'-phosphate salvage; pyridoxal 5'-phosphate from pyridoxine 5'-phosphate: step 1/1. In terms of biological role, catalyzes the oxidation of either pyridoxine 5'-phosphate (PNP) or pyridoxamine 5'-phosphate (PMP) into pyridoxal 5'-phosphate (PLP). The sequence is that of Pyridoxine/pyridoxamine 5'-phosphate oxidase from Neisseria gonorrhoeae (strain ATCC 700825 / FA 1090).